A 320-amino-acid polypeptide reads, in one-letter code: Aspartate carbamoyltransferase catalytic subunit (320 aa).

The carbamoyl phosphate site is built by R68 and T69. K96 provides a ligand contact to L-aspartate. The carbamoyl phosphate site is built by R118, H148, and Q151. Residues R181 and R236 each coordinate L-aspartate. Carbamoyl phosphate is bound by residues G277 and P278.

This sequence belongs to the aspartate/ornithine carbamoyltransferase superfamily. ATCase family. As to quaternary structure, heterododecamer (2C3:3R2) of six catalytic PyrB chains organized as two trimers (C3), and six regulatory PyrI chains organized as three dimers (R2).

It carries out the reaction carbamoyl phosphate + L-aspartate = N-carbamoyl-L-aspartate + phosphate + H(+). It functions in the pathway pyrimidine metabolism; UMP biosynthesis via de novo pathway; (S)-dihydroorotate from bicarbonate: step 2/3. Its function is as follows. Catalyzes the condensation of carbamoyl phosphate and aspartate to form carbamoyl aspartate and inorganic phosphate, the committed step in the de novo pyrimidine nucleotide biosynthesis pathway. The polypeptide is Aspartate carbamoyltransferase catalytic subunit (Delftia acidovorans (strain DSM 14801 / SPH-1)).